The primary structure comprises 875 residues: Leucine--tRNA ligase (875 aa).

The 'HIGH' region motif lies at 57–67; that stretch reads PYPSGQIHMGH. The short motif at 631–635 is the 'KMSKS' region element; the sequence is KMSKS. Lysine 634 is a binding site for ATP.

Belongs to the class-I aminoacyl-tRNA synthetase family.

The protein localises to the cytoplasm. The catalysed reaction is tRNA(Leu) + L-leucine + ATP = L-leucyl-tRNA(Leu) + AMP + diphosphate. The polypeptide is Leucine--tRNA ligase (Granulibacter bethesdensis (strain ATCC BAA-1260 / CGDNIH1)).